The sequence spans 571 residues: Proline--tRNA ligase (571 aa).

This sequence belongs to the class-II aminoacyl-tRNA synthetase family. ProS type 1 subfamily. As to quaternary structure, homodimer.

It is found in the cytoplasm. It carries out the reaction tRNA(Pro) + L-proline + ATP = L-prolyl-tRNA(Pro) + AMP + diphosphate. In terms of biological role, catalyzes the attachment of proline to tRNA(Pro) in a two-step reaction: proline is first activated by ATP to form Pro-AMP and then transferred to the acceptor end of tRNA(Pro). As ProRS can inadvertently accommodate and process non-cognate amino acids such as alanine and cysteine, to avoid such errors it has two additional distinct editing activities against alanine. One activity is designated as 'pretransfer' editing and involves the tRNA(Pro)-independent hydrolysis of activated Ala-AMP. The other activity is designated 'posttransfer' editing and involves deacylation of mischarged Ala-tRNA(Pro). The misacylated Cys-tRNA(Pro) is not edited by ProRS. This is Proline--tRNA ligase from Actinobacillus pleuropneumoniae serotype 3 (strain JL03).